The chain runs to 122 residues: MKEYFLIGIGGFTGAVLRYVISGIIPVKFGIPTGTLMVNLIGSFIVGFLMYSSLFTGISYEYRLFIITGFCGALTTFSTFSYESFSLLEQHYFIKSGINILTNVTGCISMIYFGRMVSSSFW.

Helical transmembrane passes span 5–25, 29–49, 65–85, and 93–113; these read FLIGIGGFTGAVLRYVISGII, FGIPTGTLMVNLIGSFIVGFL, FIITGFCGALTTFSTFSYESF, and FIKSGINILTNVTGCISMIYF. Na(+) is bound by residues glycine 72 and threonine 75.

The protein belongs to the fluoride channel Fluc/FEX (TC 1.A.43) family.

The protein localises to the cell membrane. It catalyses the reaction fluoride(in) = fluoride(out). Its activity is regulated as follows. Na(+) is not transported, but it plays an essential structural role and its presence is essential for fluoride channel function. Its function is as follows. Fluoride-specific ion channel. Important for reducing fluoride concentration in the cell, thus reducing its toxicity. This is Fluoride-specific ion channel FluC from Methanococcus vannielii (strain ATCC 35089 / DSM 1224 / JCM 13029 / OCM 148 / SB).